The chain runs to 193 residues: Acyl-homoserine-lactone synthase (193 aa).

It belongs to the autoinducer synthase family.

The enzyme catalyses a fatty acyl-[ACP] + S-adenosyl-L-methionine = an N-acyl-L-homoserine lactone + S-methyl-5'-thioadenosine + holo-[ACP] + H(+). Required for the synthesis of N-(3-oxodecanoyl)-L-homoserine lactone (ODHL), an autoinducer molecule which binds to VanR. The sequence is that of Acyl-homoserine-lactone synthase (vanI) from Vibrio anguillarum (Listonella anguillarum).